We begin with the raw amino-acid sequence, 260 residues long: MAIDDIFIQAFRTHQQKGDLFHPLGHEDHEVFQSSTIGALMEGVYDGDTTYGELARHGDFGLGTFNALDGEMIALGGRFFQIKSDGKAYPVPPTAKTPFAVVTLFDPTVQVVWPDPIDWKQFQAAVDKAVPSKNVFYAIRVRACFDHIRVRTVPRQRKPYPPLVEVARRQPEFEYGHLEGTLVGFRFPDYTQGVNVAGYHVHFLDKAETLGGHVLDFSMRNAVVDIDVTSQFRMEVPECGAFLDADLARNQDEAIHEAEN.

Belongs to the alpha-acetolactate decarboxylase family.

The enzyme catalyses (2S)-2-acetolactate + H(+) = (R)-acetoin + CO2. Its pathway is polyol metabolism; (R,R)-butane-2,3-diol biosynthesis; (R,R)-butane-2,3-diol from pyruvate: step 2/3. Functionally, converts acetolactate into acetoin. This chain is Alpha-acetolactate decarboxylase (budA), found in Methylococcus capsulatus (strain ATCC 33009 / NCIMB 11132 / Bath).